The following is a 251-amino-acid chain: Octanoyltransferase (251 aa).

Residues 29-216 (GVIQDTLLLL…NFGFIFKEQV (188 aa)) form the BPL/LPL catalytic domain. Substrate contacts are provided by residues 74–81 (RGGDVTFH), 146–148 (AIG), and 159–161 (GFA). The Acyl-thioester intermediate role is filled by cysteine 177.

Belongs to the LipB family.

The protein resides in the cytoplasm. The enzyme catalyses octanoyl-[ACP] + L-lysyl-[protein] = N(6)-octanoyl-L-lysyl-[protein] + holo-[ACP] + H(+). It functions in the pathway protein modification; protein lipoylation via endogenous pathway; protein N(6)-(lipoyl)lysine from octanoyl-[acyl-carrier-protein]: step 1/2. Functionally, catalyzes the transfer of endogenously produced octanoic acid from octanoyl-acyl-carrier-protein onto the lipoyl domains of lipoate-dependent enzymes. Lipoyl-ACP can also act as a substrate although octanoyl-ACP is likely to be the physiological substrate. In Koribacter versatilis (strain Ellin345), this protein is Octanoyltransferase.